Here is a 782-residue protein sequence, read N- to C-terminus: Structure-specific endonuclease subunit SLX4 (782 aa).

Disordered regions lie at residues 63–91 and 359–425; these read TPKP…MSAM and KEHE…KKSK. A compositionally biased stretch (basic residues) spans 73–84; the sequence is GLRKTGSRKSKK. Residues 374-388 are compositionally biased toward polar residues; sequence PAQSLTQSQVPSSID.

It belongs to the SLX4 family. As to quaternary structure, forms a heterodimer with SLX1. Post-translationally, phosphorylated in response to DNA damage.

Its subcellular location is the nucleus. Functionally, regulatory subunit of the SLX1-SLX4 structure-specific endonuclease that resolves DNA secondary structures generated during DNA repair and recombination. Has endonuclease activity towards branched DNA substrates, introducing single-strand cuts in duplex DNA close to junctions with ss-DNA. This chain is Structure-specific endonuclease subunit SLX4, found in Scheffersomyces stipitis (strain ATCC 58785 / CBS 6054 / NBRC 10063 / NRRL Y-11545) (Yeast).